A 391-amino-acid chain; its full sequence is ATP-sensitive inward rectifier potassium channel 1 (391 aa).

The Cytoplasmic portion of the chain corresponds to 1–77 (MNASSRNVFD…IWTTVLDLKW (77 aa)). The residue at position 44 (Ser44) is a Phosphoserine; by SGK1. A helical transmembrane segment spans residues 78–102 (RYKMTIFITAFLGSWFFFGLLWYAV). Over 103–127 (AYIHKDLPEFHPSANHTPCVENING) the chain is Extracellular. Residue Asn117 is glycosylated (N-linked (GlcNAc...) asparagine). The segment at residues 128-139 (LTSAFLFSLETQ) is an intramembrane region (helical; Pore-forming). An intramembrane region (pore-forming) is located at residues 140 to 146 (VTIGYGF). The Selectivity filter motif lies at 141-146 (TIGYGF). At 147-155 (RCVTEQCAT) the chain is on the extracellular side. A helical transmembrane segment spans residues 156-177 (AIFLLIFQSILGVIINSFMCGA). Residues 178–391 (ILAKISRPKK…EVNETDDTKM (214 aa)) are Cytoplasmic-facing. The polyphosphoinositide (PIP2)-binding stretch occupies residues 180–207 (AKISRPKKRAKTITFSKNAVISKRGGKL). 223–230 (GSHIYGKL) provides a ligand contact to ATP.

Belongs to the inward rectifier-type potassium channel (TC 1.A.2.1) family. KCNJ1 subfamily. Interacts with SGK1 and SLC9A3R2/NHERF2. In terms of processing, phosphorylation at Ser-44 by SGK1 is necessary for its expression at the cell membrane. As to expression, in the kidney and pancreatic islets. Lower levels in skeletal muscle, pancreas, spleen, brain, heart and liver.

It localises to the cell membrane. It catalyses the reaction K(+)(in) = K(+)(out). Its activity is regulated as follows. Inhibited by WNK3. Activated by phosphatidylinositol 4,5 biphosphate (PtdIns(4,5)P2). In terms of biological role, inward rectifier potassium channels are characterized by a greater tendency to allow potassium to flow into the cell rather than out of it. Their voltage dependence is regulated by the concentration of extracellular potassium; as external potassium is raised, the voltage range of the channel opening shifts to more positive voltages. The inward rectification is mainly due to the blockage of outward current by internal magnesium. This channel is activated by internal ATP and can be blocked by external barium. In the kidney, probably plays a major role in potassium homeostasis. The polypeptide is ATP-sensitive inward rectifier potassium channel 1 (KCNJ1) (Homo sapiens (Human)).